A 172-amino-acid chain; its full sequence is MPLRASEHAYRPLGPGTPPMRARLPAAAWVGVGTIIGGVVIIAALVLVPSRASWALSPCDSGWHEFNLGCISWDPTPMEHEQAVGGCSAPATLIPRAAAKQLAAVARVQSARSSGYWWVSGDGIRACLRLVDGVGGIDQFCEEPALRICYYPRSPGGFVQFVTSTRNALGLP.

The Intravirion segment spans residues 1-27 (MPLRASEHAYRPLGPGTPPMRARLPAA). A helical; Signal-anchor for type II membrane protein membrane pass occupies residues 28–48 (AWVGVGTIIGGVVIIAALVLV). Residues 49–172 (PSRASWALSP…TSTRNALGLP (124 aa)) lie on the Virion surface side of the membrane.

It belongs to the herpesviridae HHV-1 UL45 family.

It localises to the virion membrane. Its function is as follows. Important virulence factor of HSV neurotropism. Seems to be required for glycoprotein B-induced fusion. Dispensable for growth in vitro. The protein is Envelope protein UL45 of Human herpesvirus 1 (strain 17) (HHV-1).